Here is a 316-residue protein sequence, read N- to C-terminus: Small ribosomal subunit protein RACK1 (316 aa).

7 WD repeats span residues 4-46 (QMTL…WRLT), 52-93 (YGVP…WDLS), 94-135 (TGQT…WNTL), 137-180 (VCKY…WNLT), 181-221 (NCKL…LWDL), 222-263 (NEGK…WDLE), and 264-312 (GKVV…WQVS).

This sequence belongs to the WD repeat G protein beta family. Ribosomal protein RACK1 subfamily.

The protein is Small ribosomal subunit protein RACK1 of Biomphalaria glabrata (Bloodfluke planorb).